We begin with the raw amino-acid sequence, 257 residues long: Ribosome-associated protein quality control protein P2 (257 aa).

The N-terminal domain stretch occupies residues 1–74; sequence MSDIYQHFRK…RAERKRAILF (74 aa). The central region stretch occupies residues 87–166; that stretch reads LQAFNVRYAD…EKIDLSDLNI (80 aa). In terms of domain architecture, S4 RNA-binding spans 181–251; that stretch reads LRLDAVCASM…GKTKKDKWRV (71 aa).

As to quaternary structure, in the presence of chloramphenicol (a translation elongation inhibitor), but not erythromycin or lincomycin, associates with 50S ribosomal subunits with or without a tRNA in the P-site. The S4 domain binds in a similar position to RqcP.

It localises to the cytoplasm. Functionally, part of the ribosome quality control system (RQC), a ribosome-associated complex that mediates the extraction of incompletely synthesized nascent chains from stalled ribosomes and their subsequent degradation. RqcH recruits Ala-charged tRNA, and with RqcP directs the elongation of stalled nascent chains on 50S ribosomal subunits, leading to non-templated C-terminal alanine extensions (Ala tail). The Ala tail promotes nascent chain degradation. RqcP2 (YlmH) overexpression can compensate for RqcP's role in Ala tailing during RQC, restoring Ala tail addition to peptides in stalled ribosomes. Overexpression complements a double ssrA-rqcP double deletion, but not an ssrA-rqcH double deletion. Its function is as follows. The majority of tagged protein is associated with tRNA-less 50S subunits, suggesting it might also play a role in late stage 50S subunit biogenesis. The polypeptide is Ribosome-associated protein quality control protein P2 (Bacillus subtilis (strain 168)).